The chain runs to 81 residues: Cytochrome b559 subunit alpha (81 aa).

A helical transmembrane segment spans residues 21 to 35 (VIHSITIPMLFIAGW). Position 23 (His-23) interacts with heme.

It belongs to the PsbE/PsbF family. Heterodimer of an alpha subunit and a beta subunit. PSII is composed of 1 copy each of membrane proteins PsbA, PsbB, PsbC, PsbD, PsbE, PsbF, PsbH, PsbI, PsbJ, PsbK, PsbL, PsbM, PsbT, PsbX, PsbY, PsbZ, Psb30/Ycf12, peripheral proteins PsbO, CyanoQ (PsbQ), PsbU, PsbV and a large number of cofactors. It forms dimeric complexes. Requires heme b as cofactor.

The protein localises to the cellular thylakoid membrane. Functionally, this b-type cytochrome is tightly associated with the reaction center of photosystem II (PSII). PSII is a light-driven water:plastoquinone oxidoreductase that uses light energy to abstract electrons from H(2)O, generating O(2) and a proton gradient subsequently used for ATP formation. It consists of a core antenna complex that captures photons, and an electron transfer chain that converts photonic excitation into a charge separation. This chain is Cytochrome b559 subunit alpha, found in Crocosphaera subtropica (strain ATCC 51142 / BH68) (Cyanothece sp. (strain ATCC 51142)).